A 313-amino-acid chain; its full sequence is Acetyl-coenzyme A carboxylase carboxyl transferase subunit alpha (313 aa).

The CoA carboxyltransferase C-terminal domain maps to 42-292 (KSDKLLRDTY…GAAIGEELDK (251 aa)).

The protein belongs to the AccA family. Acetyl-CoA carboxylase is a heterohexamer composed of biotin carboxyl carrier protein (AccB), biotin carboxylase (AccC) and two subunits each of ACCase subunit alpha (AccA) and ACCase subunit beta (AccD).

Its subcellular location is the cytoplasm. It carries out the reaction N(6)-carboxybiotinyl-L-lysyl-[protein] + acetyl-CoA = N(6)-biotinyl-L-lysyl-[protein] + malonyl-CoA. Its pathway is lipid metabolism; malonyl-CoA biosynthesis; malonyl-CoA from acetyl-CoA: step 1/1. Component of the acetyl coenzyme A carboxylase (ACC) complex. First, biotin carboxylase catalyzes the carboxylation of biotin on its carrier protein (BCCP) and then the CO(2) group is transferred by the carboxyltransferase to acetyl-CoA to form malonyl-CoA. The protein is Acetyl-coenzyme A carboxylase carboxyl transferase subunit alpha of Rhizorhabdus wittichii (strain DSM 6014 / CCUG 31198 / JCM 15750 / NBRC 105917 / EY 4224 / RW1) (Sphingomonas wittichii).